We begin with the raw amino-acid sequence, 138 residues long: ATP synthase epsilon chain (138 aa).

This sequence belongs to the ATPase epsilon chain family. F-type ATPases have 2 components, CF(1) - the catalytic core - and CF(0) - the membrane proton channel. CF(1) has five subunits: alpha(3), beta(3), gamma(1), delta(1), epsilon(1). CF(0) has three main subunits: a, b and c.

It is found in the cellular thylakoid membrane. In terms of biological role, produces ATP from ADP in the presence of a proton gradient across the membrane. This is ATP synthase epsilon chain (atpC) from Synechococcus sp. (strain PCC 6716).